We begin with the raw amino-acid sequence, 295 residues long: HTH-type transcriptional regulator TfdS (295 aa).

Residues 1 to 58 (MEFRQLRYFVAAAEEGNVGAAARRLHISQPPVTRQIHALEQHLGVLLFERSARGVQLT) enclose the HTH lysR-type domain. The segment at residues 18 to 37 (VGAAARRLHISQPPVTRQIH) is a DNA-binding region (H-T-H motif).

It belongs to the LysR transcriptional regulatory family.

It localises to the cytoplasm. Involved in the regulation of 3-chlorocatechol degradation. Transcriptional regulator of tfdB expression. Acts as a repressor in the absence of its effector (either 2-cis-chlorodiene lactone or chloromaleylacetate) but acts as an activator when its effector is present. In Cupriavidus pinatubonensis (strain JMP 134 / LMG 1197) (Cupriavidus necator (strain JMP 134)), this protein is HTH-type transcriptional regulator TfdS (tfdS).